A 591-amino-acid chain; its full sequence is Reduced folate transporter (591 aa).

Position 1 is an N-acetylmethionine (M1). At 1-29 (MVPSSPAVEKQVPVEPGPDPELRSWRHLV) the chain is on the cytoplasmic side. S5 carries the post-translational modification Phosphoserine. A helical membrane pass occupies residues 30–50 (CYLCFYGFMAQIRPGESFITP). Folate contacts are provided by I48 and T49. Residues 51-64 (YLLGPDKNFTREQV) lie on the Extracellular side of the membrane. N-linked (GlcNAc...) asparagine glycosylation is present at N58. Residues 65 to 87 (TNEITPVLSYSYLAVLVPVFLLT) traverse the membrane as a helical segment. The Cytoplasmic portion of the chain corresponds to 88 to 91 (DYLR). The helical transmembrane segment at 92-112 (YTPVLLLQGLSFVSVWLLLLL) threads the bilayer. At 113 to 116 (GHSV) the chain is on the extracellular side. Residues 117 to 139 (AHMQLMELFYSVTMAARIAYSSY) form a helical membrane-spanning segment. Positions 123 and 133 each coordinate folate. 5 residues coordinate 2',3'-cGAMP: R133, I134, S137, Y149, and R157. At 140–153 (IFSLVRPARYQRVA) the chain is on the cytoplasmic side. Residues 154–178 (GYSRAAVLLGVFTSSVLGQLLVTVG) form a helical membrane-spanning segment. V164 serves as a coordination point for folate. The Extracellular segment spans residues 179-183 (RVSFS). Residues 184–202 (TLNYISLAFLTFSVVLALF) form a helical membrane-spanning segment. Residues 203 to 266 (LKRPKRSLFF…ELGDSLRRPQ (64 aa)) lie on the Cytoplasmic side of the membrane. Residue S225 is modified to Phosphoserine. The helical transmembrane segment at 267-292 (LRLWSLWWVFNSAGYYLVVYYVHILW) threads the bilayer. The folate site is built by Y281, Y282, and Y286. Y282 serves as a coordination point for 2',3'-cGAMP. Over 293 to 304 (NEVDPTTNSARV) the chain is Extracellular. The helical transmembrane segment at 305-327 (YNGAADAASTLLGAITSFAAGFV) threads the bilayer. S321 provides a ligand contact to 2',3'-cGAMP. At 328–333 (KIRWAR) the chain is on the cytoplasmic side. A helical membrane pass occupies residues 334–354 (WSKLLIAGVTATQAGLVFLLA). The Extracellular segment spans residues 355–360 (HTRHPS). Residues 361 to 384 (SIWLCYAAFVLFRGSYQFLVPIAT) traverse the membrane as a helical segment. Residues R373 and Q377 each coordinate folate. Q377, P381, T384, K393, C396, and F400 together coordinate 2',3'-cGAMP. The Cytoplasmic portion of the chain corresponds to 385–398 (FQIASSLSKELCAL). A helical membrane pass occupies residues 399–422 (VFGVNTFFATIVKTIITFIVSDVR). The segment at 407 to 419 (ATIVKTIITFIVS) is required for substrate-binding. At 423–430 (GLGLPVRK) the chain is on the extracellular side. Residues 431–455 (QFQLYSVYFLILSIIYFLGAMLDGL) traverse the membrane as a helical segment. Residues 456-591 (RHCQRGHHPR…PSDGVQNVNQ (136 aa)) are Cytoplasmic-facing. Residues S474, S485, S499, and S503 each carry the phosphoserine modification.

This sequence belongs to the reduced folate carrier (RFC) transporter (TC 2.A.48) family. In terms of tissue distribution, placenta, liver, and to a much smaller extent, in lung.

The protein localises to the cell membrane. It is found in the apical cell membrane. It localises to the basolateral cell membrane. The enzyme catalyses 5-amino-1-(5-phospho-beta-D-ribosyl)imidazole-4-carboxamide(in) + (6S)-5-methyl-5,6,7,8-tetrahydrofolate(out) = 5-amino-1-(5-phospho-beta-D-ribosyl)imidazole-4-carboxamide(out) + (6S)-5-methyl-5,6,7,8-tetrahydrofolate(in). It carries out the reaction 2',3'-cGAMP(out) + 5-amino-1-(5-phospho-beta-D-ribosyl)imidazole-4-carboxamide(in) = 2',3'-cGAMP(in) + 5-amino-1-(5-phospho-beta-D-ribosyl)imidazole-4-carboxamide(out). It catalyses the reaction 3',3'-cGAMP(out) + 5-amino-1-(5-phospho-beta-D-ribosyl)imidazole-4-carboxamide(in) = 3',3'-cGAMP(in) + 5-amino-1-(5-phospho-beta-D-ribosyl)imidazole-4-carboxamide(out). Functionally, antiporter that mediates the import of reduced folates or a subset of cyclic dinucleotides, driven by the export of organic anions. Acts as an importer of immunoreactive cyclic dinucleotides, such as cyclic GMP-AMP (2'-3'-cGAMP), an immune messenger produced in response to DNA virus in the cytosol, and its linkage isomer 3'-3'-cGAMP, thus playing a role in triggering larger immune responses. Mechanistically, acts as a secondary active transporter, which exports intracellular organic anions down their concentration gradients to facilitate the uptake of its substrates. Has high affinity for N5-methyltetrahydrofolate, the predominant circulating form of folate. Also mediates the import of antifolate drug methotrexate. 5-amino-4-imidazolecarboxamide riboside (AICAR), when phosphorylated to AICAR monophosphate, can serve as an organic anion for antiporter activity. The chain is Reduced folate transporter from Homo sapiens (Human).